We begin with the raw amino-acid sequence, 253 residues long: Endonuclease NucS (253 aa).

The tract at residues 63–91 is disordered; the sequence is IDDPDTDFTDGSSVGNSEEQGTDGSAHTA. Over residues 71–87 the composition is skewed to polar residues; sequence TDGSSVGNSEEQGTDGS.

This sequence belongs to the NucS endonuclease family.

It is found in the cytoplasm. Cleaves both 3' and 5' ssDNA extremities of branched DNA structures. This Corynebacterium kroppenstedtii (strain DSM 44385 / JCM 11950 / CIP 105744 / CCUG 35717) protein is Endonuclease NucS.